Here is a 470-residue protein sequence, read N- to C-terminus: MSTNQGSLWGGRFAGGPSDALAALSKSTHFDWALAPYDVTASRAHAVVLFRAGLLTEEQRDGLLAGLDSLASDVADGSFGPLVSDEDVHAALERGLIERVGPDLGGRLRAGRSRNDQVATLFRMWLRDAVRRVATGVLEVVAALGDQAAAHPTAIMPGKTHLQSAQPILLAHHLLAHAHPLLRDVERIVDFDKRAAVSPYGSGALAGSSLGLDPDAIAADLGFTTAADNSVDATASRDFAAEAAFIFAMIAVDLSRLAEDIIIWSSTEFGYVTLHDSWSTGSSIMPQKKNPDIAELARGKSGRLIGNLTGLLATLKAQPLAYNRDLQEDKEPVFDSVVQLELLLPAMAGLVGSLTFDVERMAALAPAGYTLATDVAEWLVRQGVPFRSAHEAAGAAVRTAEERSVGLEELTDDELAAISPELTPQVRDVLTIEGSVSARDSRGGTAPKRVAEQLQIVREITARLGHELMR.

This sequence belongs to the lyase 1 family. Argininosuccinate lyase subfamily.

It localises to the cytoplasm. It catalyses the reaction 2-(N(omega)-L-arginino)succinate = fumarate + L-arginine. Its pathway is amino-acid biosynthesis; L-arginine biosynthesis; L-arginine from L-ornithine and carbamoyl phosphate: step 3/3. The protein is Argininosuccinate lyase of Mycobacterium marinum (strain ATCC BAA-535 / M).